The primary structure comprises 123 residues: Holo-[acyl-carrier-protein] synthase (123 aa).

Mg(2+)-binding residues include Asp-8 and Glu-55.

It belongs to the P-Pant transferase superfamily. AcpS family. Mg(2+) is required as a cofactor.

The protein localises to the cytoplasm. The catalysed reaction is apo-[ACP] + CoA = holo-[ACP] + adenosine 3',5'-bisphosphate + H(+). Transfers the 4'-phosphopantetheine moiety from coenzyme A to a Ser of acyl-carrier-protein. The protein is Holo-[acyl-carrier-protein] synthase of Caldicellulosiruptor saccharolyticus (strain ATCC 43494 / DSM 8903 / Tp8T 6331).